The following is a 728-amino-acid chain: Diacylglycerol kinase 1 (728 aa).

A helical transmembrane segment spans residues 27–48 (GLMFSCFVAALVGILTIAYTAF). Phorbol-ester/DAG-type zinc fingers lie at residues 79 to 137 (PHSW…PKDC) and 149 to 212 (VHQW…GDIC). Disordered stretches follow at residues 265-296 (KQTN…PTVN) and 308-336 (VMNG…TGSF). The segment covering 267 to 294 (TNETSADTGNSGSNCDESTESTADTGPT) has biased composition (polar residues). Positions 310–319 (NGDSSNGDSD) are enriched in low complexity. A DAGKc domain is found at 357–496 (SDARPLLVFI…LDRWKVSILN (140 aa)). Residues K491 and K500 each participate in a glycyl lysine isopeptide (Lys-Gly) (interchain with G-Cter in ubiquitin) cross-link.

Belongs to the eukaryotic diacylglycerol kinase family. Monomer. In terms of tissue distribution, expressed in roots, shoots, and leaves.

The protein resides in the membrane. It carries out the reaction a 1,2-diacyl-sn-glycerol + ATP = a 1,2-diacyl-sn-glycero-3-phosphate + ADP + H(+). Phosphorylates the second messenger diacylglycerol (DAG) to generate phosphatidic acid (PA), another important signaling molecule. PA is required for plant development and responses to abiotic stress and pathogen attack. May be involved in the accumulation of PA during cold stress. This Arabidopsis thaliana (Mouse-ear cress) protein is Diacylglycerol kinase 1 (DGK1).